A 323-amino-acid chain; its full sequence is Ribose-phosphate pyrophosphokinase 2 (323 aa).

ATP is bound by residues 43–45 (DGE) and 102–103 (RQ). Mg(2+) is bound by residues H136 and D177. K200 is a catalytic residue. D-ribose 5-phosphate-binding positions include R202, D226, and 230 to 234 (DTAGT).

The protein belongs to the ribose-phosphate pyrophosphokinase family. Class I subfamily. In terms of assembly, homohexamer. Mg(2+) serves as cofactor.

It is found in the cytoplasm. It catalyses the reaction D-ribose 5-phosphate + ATP = 5-phospho-alpha-D-ribose 1-diphosphate + AMP + H(+). The protein operates within metabolic intermediate biosynthesis; 5-phospho-alpha-D-ribose 1-diphosphate biosynthesis; 5-phospho-alpha-D-ribose 1-diphosphate from D-ribose 5-phosphate (route I): step 1/1. Involved in the biosynthesis of the central metabolite phospho-alpha-D-ribosyl-1-pyrophosphate (PRPP) via the transfer of pyrophosphoryl group from ATP to 1-hydroxyl of ribose-5-phosphate (Rib-5-P). The chain is Ribose-phosphate pyrophosphokinase 2 from Enterococcus faecalis (strain ATCC 700802 / V583).